The sequence spans 700 residues: Methionine--tRNA ligase (700 aa).

A 'HIGH' region motif is present at residues 14–24 (PYANGPVHLGH). C146, C149, C159, and C162 together coordinate Zn(2+). The 'KMSKS' region motif lies at 344-348 (KFSKS). K347 serves as a coordination point for ATP. The region spanning 599-700 (DFLKVDLRVA…GEEINGRQIQ (102 aa)) is the tRNA-binding domain.

Belongs to the class-I aminoacyl-tRNA synthetase family. MetG type 1 subfamily. As to quaternary structure, homodimer. It depends on Zn(2+) as a cofactor.

The protein resides in the cytoplasm. The catalysed reaction is tRNA(Met) + L-methionine + ATP = L-methionyl-tRNA(Met) + AMP + diphosphate. Its function is as follows. Is required not only for elongation of protein synthesis but also for the initiation of all mRNA translation through initiator tRNA(fMet) aminoacylation. The protein is Methionine--tRNA ligase of Pelodictyon phaeoclathratiforme (strain DSM 5477 / BU-1).